Consider the following 60-residue polypeptide: Large ribosomal subunit protein bL32 (60 aa).

Over residues 1–16 the composition is skewed to basic residues; the sequence is MAVPKKKTSKSRKNMR. Residues 1-20 are disordered; the sequence is MAVPKKKTSKSRKNMRRAHD.

It belongs to the bacterial ribosomal protein bL32 family.

The polypeptide is Large ribosomal subunit protein bL32 (Geobacter metallireducens (strain ATCC 53774 / DSM 7210 / GS-15)).